Consider the following 129-residue polypeptide: Putative transmembrane protein 10 (129 aa).

3 helical membrane-spanning segments follow: residues 3 to 23 (NFSY…AFAG), 27 to 47 (LLVG…LSSL), and 85 to 105 (SSVL…FFVF).

Its subcellular location is the host membrane. This chain is Putative transmembrane protein 10 (SIFV0010), found in Sulfolobus islandicus filamentous virus (isolate Iceland/Hveragerdi) (SIFV).